The primary structure comprises 553 residues: Cytochrome P450 86A22 (553 aa).

The helical transmembrane segment at 8 to 24 threads the bilayer; sequence MIVAIVAAYLLWFKSIT. C459 serves as a coordination point for heme.

This sequence belongs to the cytochrome P450 family. Heme serves as cofactor. Mostly expressed in the developing stigma of floral buds. Weakly detected in leaves, stems and flowers.

It is found in the membrane. The enzyme catalyses (9Z)-octadecenoyl-CoA + reduced [NADPH--hemoprotein reductase] + O2 = (9Z)-18-hydroxyoctadecenoyl-CoA + oxidized [NADPH--hemoprotein reductase] + H2O + H(+). It catalyses the reaction (9Z,12Z)-octadecadienoyl-CoA + reduced [NADPH--hemoprotein reductase] + O2 = (9Z,12Z)-18-hydroxyoctadecadienoyl-CoA + oxidized [NADPH--hemoprotein reductase] + H2O + H(+). Functionally, fatty acyl-CoA omega-hydroxylase essential for the production of omega-hydroxy fatty acids and the biosynthesis of triacylglycerol-/diacylglycerol-based estolide polyesters in the stigma. Substrate preference is 16:0-CoA &gt; 18:1-CoA &gt; 18:0-CoA. The polypeptide is Cytochrome P450 86A22 (Petunia hybrida (Petunia)).